Consider the following 542-residue polypeptide: MLQVASGNREEGQVVELKKTKYLPYLFNLVMPKSFYHSHNRIVVARLYSNVHKHDKQAAEFFEGFQTPCFEVPASMFPGEAPLNKIVFMPPVMLPMGFEAGGVFGPGVLPRRSYPIDLTASGHKGQSPPLFVGLRRLYVQLPSEIESFLDKMGEFPATQDTLVYGMRRSNQLLKEEQAQELMLRNDLSLSMAYNLPAPPTPPSPYPYRHVPVQYNIYTPDLSNVLMMMPHQRKLTVAILSTVNNPHVPSVALATMGDEECPKFELPSDVFPICEGVNRPIFLPRRFLPKGFESGCVFKPGSLSELWFMGYMGRFSPPQPQHNCAITPPLFVGKISRVVLAFDLMKNIQMEYGAAQSSAQSEGSLNAVEPKKPNVPITKGFLVMETEHPTPPSGGYSLQSYQEGSAKGCVVKVEKGETQEMDEAHPTKEESKSEEEGEVQSGSQEEKYLSWFKVDSDIDLIAETMVDMGTAQMSLIDEEALPGVDGACVLNQLREVFEDRNEIRQNIDQLIHDHIYRMNRDRMLALRLPIRSYFRMYDKVDNQ.

A compositionally biased stretch (basic and acidic residues) spans 415 to 430; that stretch reads GETQEMDEAHPTKEES. The disordered stretch occupies residues 415 to 443; that stretch reads GETQEMDEAHPTKEESKSEEEGEVQSGSQ.

The protein belongs to the DM7 family.

The chain is DM7 family protein GG17591 from Drosophila erecta (Fruit fly).